The sequence spans 728 residues: MSTEAKCPFNHAAGSGTSNRDWWPHQLNLGILRQHSSLADPMDKGFNYAEEFKSLDLAAVKHDLAALMTVSQDWWPADFGHYGGLFIRMAWHAAGTYRTGDGRGGAGSGQQRFAPLNSWPDNVNLDKARRLLWPIKQKYGKKISWADLIVLTGNVALESMGFKTFGFGGGREDVWEPDQDVYWGSETTWLADKRYSGVRDLENPLAAVQMGLIYVNPEGPNGNPDPAKAAVDIRETFARMAMNDEETVALIAGGHTFGKTHGAGPASHVGPEPEAAGIEEQGLGWRSSFGSGKGSDAITSGLEVIWTSTPTKWSNNFFWNLFGYEWELTKSPAGAHQWKPNGDAGANSIPDPYDPSRRRGPTMLTTDLSLRVDPAYEKISRRFHENPDQFADAFARAWFKLTHRDMGPRSRYLGPEVPAEELIWQDPIPAVDHVLIDEQDVAALKGKILATGVPVSQLVSTAWASASTFRGSDKRGGANGARIRLAPQKDWEVNQPAVLAQVLETLEGIRNEFNSSQSGGKKVSLADLIVLAGCAGIEQAAKKGGHDVKVPFTPGRMDATQEQTDVESFSVMEPIADGFRNYLKGTYAVTAETLLVDKAQLLTLTVPEVTALVGGMRVLNANFGQTQHGVFTDRPETLTNDFFVNVLDMGTEWKPTADNKDLFEGYDRATGKLKWTGTRVDLIFGSNSELRAVAEVYGCADAKEKFVQDFVAAWNKVMNLDRFEAANR.

A cross-link (tryptophyl-tyrosyl-methioninium (Trp-Tyr) (with M-240)) is located at residues 91–214; it reads WHAAGTYRTG…LAAVQMGLIY (124 aa). The Proton acceptor role is filled by His-92. A cross-link (tryptophyl-tyrosyl-methioninium (Tyr-Met) (with W-91)) is located at residues 214–240; the sequence is YVNPEGPNGNPDPAKAAVDIRETFARM. His-255 is a binding site for heme b. The tract at residues 338–362 is disordered; the sequence is WKPNGDAGANSIPDPYDPSRRRGPT.

It belongs to the peroxidase family. Peroxidase/catalase subfamily. As to quaternary structure, homodimer or homotetramer. The cofactor is heme b. Post-translationally, formation of the three residue Trp-Tyr-Met cross-link is important for the catalase, but not the peroxidase activity of the enzyme.

It carries out the reaction H2O2 + AH2 = A + 2 H2O. The enzyme catalyses 2 H2O2 = O2 + 2 H2O. In terms of biological role, bifunctional enzyme with both catalase and broad-spectrum peroxidase activity. This Cupriavidus pinatubonensis (strain JMP 134 / LMG 1197) (Cupriavidus necator (strain JMP 134)) protein is Catalase-peroxidase 2.